The chain runs to 363 residues: MSFEKFFNTAVSAWMSQEGPDSDIVLSSRIRLARNIVDFRFPTLFSSEEAMQIVALFERTFAYRSYGGAGRFELLKMSELQPIEKRVLVEKHLISPHLAEDSPFGACLLSENEEISIMINEEDHIRIQCLFPGLQLAEALEAASELDDWIEGHVNYAFDERLGYLTSCPTNVGTGLRASVMMHLPALVLTQQINRIIPAINQLGLVVRGTYGEGSEALGNIFQISNQLTLGKSEEDIIADLHTIVQQLIAQERAARQALVKTLGIQLEDKVFRSYGILANCRVIESKEAAQCLSDVRLGIDLGYIKNVSRNILNELMILTQPGFLQQYAGGALRPEERDVRRAALIRERLKMEERRKMEGDER.

Positions 24–255 (IVLSSRIRLA…QQLIAQERAA (232 aa)) constitute a Phosphagen kinase C-terminal domain. ATP contacts are provided by residues 27–31 (SSRIR), histidine 92, arginine 126, 177–181 (RASVM), and 208–213 (RGTYGE). The short motif at 338–343 (RDVRRA) is the RDXXRA motif of the pArg binding pocket involved in allosteric regulation element.

This sequence belongs to the ATP:guanido phosphotransferase family.

It carries out the reaction L-arginyl-[protein] + ATP = N(omega)-phospho-L-arginyl-[protein] + ADP + H(+). Appears to be allosterically activated by the binding of pArg-containing polypeptides to the pArg-binding pocket localized in the C-terminal domain of McsB. Catalyzes the specific phosphorylation of arginine residues in a large number of proteins. Is part of the bacterial stress response system. Protein arginine phosphorylation has a physiologically important role and is involved in the regulation of many critical cellular processes, such as protein homeostasis, motility, competence, and stringent and stress responses, by regulating gene expression and protein activity. This is Protein-arginine kinase from Geobacillus thermodenitrificans (strain NG80-2).